We begin with the raw amino-acid sequence, 365 residues long: 3-dehydroquinate synthase (365 aa).

NAD(+) contacts are provided by residues 106–110 (GVIGD), 130–131 (TT), Lys-142, Lys-151, and 169–172 (FFAT). Positions 184, 247, and 264 each coordinate Zn(2+).

The protein belongs to the sugar phosphate cyclases superfamily. Dehydroquinate synthase family. It depends on NAD(+) as a cofactor. Requires Co(2+) as cofactor. Zn(2+) serves as cofactor.

It is found in the cytoplasm. The enzyme catalyses 7-phospho-2-dehydro-3-deoxy-D-arabino-heptonate = 3-dehydroquinate + phosphate. The protein operates within metabolic intermediate biosynthesis; chorismate biosynthesis; chorismate from D-erythrose 4-phosphate and phosphoenolpyruvate: step 2/7. In terms of biological role, catalyzes the conversion of 3-deoxy-D-arabino-heptulosonate 7-phosphate (DAHP) to dehydroquinate (DHQ). This is 3-dehydroquinate synthase from Listeria monocytogenes serotype 4b (strain F2365).